The following is a 132-amino-acid chain: Protein NrdI (132 aa).

The protein belongs to the NrdI family.

Probably involved in ribonucleotide reductase function. This chain is Protein NrdI, found in Agrobacterium fabrum (strain C58 / ATCC 33970) (Agrobacterium tumefaciens (strain C58)).